The sequence spans 374 residues: D-amino-acid oxidase 3 (374 aa).

A signal peptide spans methionine 1 to alanine 19. FAD contacts are provided by serine 11, leucine 14, lysine 34, aspartate 35, alanine 46, serine 47, and glycine 51. Residue asparagine 180 is glycosylated (N-linked (GlcNAc...) asparagine). A disulfide bridge links cysteine 214 with cysteine 271. Residues tyrosine 229, tyrosine 246, and arginine 296 each contribute to the (R)-lactate site. Anthranilate-binding residues include tyrosine 229, tyrosine 246, and arginine 296. FAD-binding residues include arginine 296, glycine 342, glycine 345, tyrosine 346, and glutamine 347. The Microbody targeting signal signature appears at alanine 372–leucine 374.

Belongs to the DAMOX/DASOX family. FAD is required as a cofactor.

The protein localises to the peroxisome matrix. It carries out the reaction a D-alpha-amino acid + O2 + H2O = a 2-oxocarboxylate + H2O2 + NH4(+). Functionally, catalyzes the oxidative deamination of D-amino acids with broad substrate specificity. Enables the organism to utilize D-amino acids as a source of nutrients. Enables the organism to utilize D-asparate and D-glutamate as a nitrogen source and may also contribute to utlization of D-tryptophan, D-tyrosine and D-asparagine as a nitrogen source. Protects the organism from the toxicity of D-amino acids, including from D-glutamate. May play a role in its interaction with the host. The chain is D-amino-acid oxidase 3 from Cryptococcus deuterogattii (strain R265) (Cryptococcus gattii VGII (strain R265)).